The sequence spans 173 residues: Large ribosomal subunit protein uL14mz (173 aa).

A mitochondrion-targeting transit peptide spans 1–61 (MAAAFASRLT…TVLKVVDNSG (61 aa)).

It belongs to the universal ribosomal protein uL14 family. Part of the mitochondrial 50S ribosomal subunit. Mostly expressed in leaves and inflorescences, including floral organs and meristems, and, to a lower extent, in pistils.

It is found in the mitochondrion. Its function is as follows. Binds to 23S rRNA in mitochondrion. This chain is Large ribosomal subunit protein uL14mz (HLP), found in Arabidopsis thaliana (Mouse-ear cress).